The chain runs to 509 residues: DNA primase large subunit (509 aa).

Positions 253–270 (LSHSYTGQDYSTQGNVGK) are interdomain linker. Residues 266 to 509 (GNVGKISLDQ…GLEDYFSEDS (244 aa)) form an interacts with PRIM1 region. The [4Fe-4S] cluster site is built by Cys-287, Cys-367, Cys-384, and Cys-424. Residues 300–442 (HLRHGGRMQY…NVDDCGFSLN (143 aa)) form an RNA:DNA duplex-binding region. A disordered region spans residues 461-486 (IKKEPIQPETPQPKPSVQKTKDASSA). At Thr-470 the chain carries Phosphothreonine.

This sequence belongs to the eukaryotic-type primase large subunit family. Heterodimer of a catalytic subunit PRIM1 and a regulatory subunit PRIM2, also known as the DNA primase complex. Interacts via (C-terminus) with PRIM1. Component of the alpha DNA polymerase complex (also known as the alpha DNA polymerase-primase complex) consisting of four subunits: the catalytic subunit POLA1, the regulatory subunit POLA2, and the primase complex subunits PRIM1 and PRIM2 respectively. Within the complex, POLA1 directly interacts with PRIM2. [4Fe-4S] cluster is required as a cofactor.

Regulatory subunit of the DNA primase complex and component of the DNA polymerase alpha complex (also known as the alpha DNA polymerase-primase complex) which play an essential role in the initiation of DNA synthesis. During the S phase of the cell cycle, the DNA polymerase alpha complex (composed of a catalytic subunit POLA1, an accessory subunit POLA2 and two primase subunits, the catalytic subunit PRIM1 and the regulatory subunit PRIM2) is recruited to DNA at the replicative forks via direct interactions with MCM10 and WDHD1. The primase subunit of the polymerase alpha complex initiates DNA synthesis by oligomerising short RNA primers on both leading and lagging strands. These primers are initially extended by the polymerase alpha catalytic subunit and subsequently transferred to polymerase delta and polymerase epsilon for processive synthesis on the lagging and leading strand, respectively. In the primase complex, both subunits are necessary for the initial di-nucleotide formation, but the extension of the primer depends only on the catalytic subunit. Binds RNA:DNA duplex and coordinates the catalytic activities of PRIM1 and POLA2 during primase-to-polymerase switch. In Homo sapiens (Human), this protein is DNA primase large subunit (PRIM2).